Here is a 225-residue protein sequence, read N- to C-terminus: NAD(P)H-quinone oxidoreductase subunit K, chloroplastic (225 aa).

Cysteine 43, cysteine 44, cysteine 108, and cysteine 139 together coordinate [4Fe-4S] cluster.

This sequence belongs to the complex I 20 kDa subunit family. As to quaternary structure, NDH is composed of at least 16 different subunits, 5 of which are encoded in the nucleus. The cofactor is [4Fe-4S] cluster.

It is found in the plastid. It localises to the chloroplast thylakoid membrane. It carries out the reaction a plastoquinone + NADH + (n+1) H(+)(in) = a plastoquinol + NAD(+) + n H(+)(out). The catalysed reaction is a plastoquinone + NADPH + (n+1) H(+)(in) = a plastoquinol + NADP(+) + n H(+)(out). In terms of biological role, NDH shuttles electrons from NAD(P)H:plastoquinone, via FMN and iron-sulfur (Fe-S) centers, to quinones in the photosynthetic chain and possibly in a chloroplast respiratory chain. The immediate electron acceptor for the enzyme in this species is believed to be plastoquinone. Couples the redox reaction to proton translocation, and thus conserves the redox energy in a proton gradient. The polypeptide is NAD(P)H-quinone oxidoreductase subunit K, chloroplastic (Olimarabidopsis pumila (Dwarf rocket)).